Reading from the N-terminus, the 326-residue chain is tRNA-modifying protein YgfZ (326 aa).

2 residues coordinate folate: W27 and W189.

This sequence belongs to the tRNA-modifying YgfZ family.

Its subcellular location is the cytoplasm. In terms of biological role, folate-binding protein involved in regulating the level of ATP-DnaA and in the modification of some tRNAs. It is probably a key factor in regulatory networks that act via tRNA modification, such as initiation of chromosomal replication. The sequence is that of tRNA-modifying protein YgfZ from Salmonella schwarzengrund (strain CVM19633).